The sequence spans 449 residues: Hyaluronidase-1 (449 aa).

The first 39 residues, 1–39 (MKPFSPEVSPDPCPATAAHLLRTYTLFLTLLELAQGCRG), serve as a signal peptide directing secretion. 2 disulfide bridges follow: Cys-58–Cys-348 and Cys-222–Cys-236. Asn-85 and Asn-114 each carry an N-linked (GlcNAc...) asparagine glycan. Glu-146 serves as the catalytic Proton donor. 3 N-linked (GlcNAc...) asparagine glycosylation sites follow: Asn-231, Asn-252, and Asn-365. Cystine bridges form between Cys-373–Cys-384, Cys-378–Cys-433, and Cys-435–Cys-444. In terms of domain architecture, EGF-like spans 433-444 (CRCYRGWSGEWC).

Belongs to the glycosyl hydrolase 56 family.

Its subcellular location is the secreted. The protein localises to the lysosome. The enzyme catalyses Random hydrolysis of (1-&gt;4)-linkages between N-acetyl-beta-D-glucosamine and D-glucuronate residues in hyaluronate.. May have a role in promoting tumor progression. May block the TGFB1-enhanced cell growth. Overexpression of HYAL1 suppressed the growth rate of colon carcinoma cell tumors in an experimental model. This Rattus norvegicus (Rat) protein is Hyaluronidase-1 (Hyal1).